We begin with the raw amino-acid sequence, 212 residues long: Neuroendocrine protein 7B2 (212 aa).

The first 26 residues, 1–26 (MVSRMVSTMLSGLLFWLASGWTPAFA), serve as a signal peptide directing secretion. Cys-120 and Cys-130 form a disulfide bridge. A phosphoserine mark is found at Ser-141 and Ser-205. The tract at residues 174–212 (GGERRKRRSVNPYLQGQRLDNVVAKKSVPHFSDEDKDPE) is disordered.

This sequence belongs to the 7B2 family. Interacts with PCSK2/PC2 early in the secretory pathway. Dissociation occurs at later stages. Post-translationally, proteolytically cleaved in the Golgi by a furin-like convertase to generate bioactive peptides. In terms of processing, sulfated on tyrosine residues.

The protein localises to the secreted. Functionally, acts as a molecular chaperone for PCSK2/PC2, preventing its premature activation in the regulated secretory pathway. Binds to inactive PCSK2 in the endoplasmic reticulum and facilitates its transport from there to later compartments of the secretory pathway where it is proteolytically matured and activated. Also required for cleavage of PCSK2 but does not appear to be involved in its folding. Plays a role in regulating pituitary hormone secretion. The C-terminal peptide inhibits PCSK2 in vitro. This is Neuroendocrine protein 7B2 (SCG5) from Homo sapiens (Human).